Reading from the N-terminus, the 123-residue chain is Large ribosomal subunit protein bL17 (123 aa).

Belongs to the bacterial ribosomal protein bL17 family. As to quaternary structure, part of the 50S ribosomal subunit. Contacts protein L32.

This Mycoplasma genitalium (strain ATCC 33530 / DSM 19775 / NCTC 10195 / G37) (Mycoplasmoides genitalium) protein is Large ribosomal subunit protein bL17.